The following is a 202-amino-acid chain: Pyridoxal 5'-phosphate synthase subunit PdxT (202 aa).

An L-glutamine-binding site is contributed by 52–54 (GES). Catalysis depends on cysteine 84, which acts as the Nucleophile. Residues arginine 120 and 148–149 (IR) contribute to the L-glutamine site. Residues histidine 185 and glutamate 187 each act as charge relay system in the active site.

It belongs to the glutaminase PdxT/SNO family. In terms of assembly, in the presence of PdxS, forms a dodecamer of heterodimers. Only shows activity in the heterodimer.

It carries out the reaction aldehydo-D-ribose 5-phosphate + D-glyceraldehyde 3-phosphate + L-glutamine = pyridoxal 5'-phosphate + L-glutamate + phosphate + 3 H2O + H(+). The catalysed reaction is L-glutamine + H2O = L-glutamate + NH4(+). The protein operates within cofactor biosynthesis; pyridoxal 5'-phosphate biosynthesis. Its function is as follows. Catalyzes the hydrolysis of glutamine to glutamate and ammonia as part of the biosynthesis of pyridoxal 5'-phosphate. The resulting ammonia molecule is channeled to the active site of PdxS. The protein is Pyridoxal 5'-phosphate synthase subunit PdxT of Methanopyrus kandleri (strain AV19 / DSM 6324 / JCM 9639 / NBRC 100938).